Consider the following 316-residue polypeptide: WEB family protein At3g13190 (316 aa).

Coiled coils occupy residues 42-90 (WNKE…MIND), 119-195 (EEES…AEEH), and 233-266 (RDET…MAQE). Residues 295-316 (STKEVLKSKPRSSSKEGCLVKC) form a disordered region.

It belongs to the WEB family.

This chain is WEB family protein At3g13190, found in Arabidopsis thaliana (Mouse-ear cress).